The chain runs to 131 residues: Small ribosomal subunit protein uS8 (131 aa).

This sequence belongs to the universal ribosomal protein uS8 family. As to quaternary structure, part of the 30S ribosomal subunit. Contacts proteins S5 and S12.

One of the primary rRNA binding proteins, it binds directly to 16S rRNA central domain where it helps coordinate assembly of the platform of the 30S subunit. The protein is Small ribosomal subunit protein uS8 of Aromatoleum aromaticum (strain DSM 19018 / LMG 30748 / EbN1) (Azoarcus sp. (strain EbN1)).